The following is a 413-amino-acid chain: Gamma-glutamyl phosphate reductase (413 aa).

Belongs to the gamma-glutamyl phosphate reductase family.

It localises to the cytoplasm. The catalysed reaction is L-glutamate 5-semialdehyde + phosphate + NADP(+) = L-glutamyl 5-phosphate + NADPH + H(+). It participates in amino-acid biosynthesis; L-proline biosynthesis; L-glutamate 5-semialdehyde from L-glutamate: step 2/2. Catalyzes the NADPH-dependent reduction of L-glutamate 5-phosphate into L-glutamate 5-semialdehyde and phosphate. The product spontaneously undergoes cyclization to form 1-pyrroline-5-carboxylate. The protein is Gamma-glutamyl phosphate reductase of Salinispora arenicola (strain CNS-205).